Reading from the N-terminus, the 335-residue chain is tRNA N6-adenosine threonylcarbamoyltransferase (335 aa).

Histidine 107 and histidine 111 together coordinate Fe cation. Residues 129–133 (LVSGG), aspartate 162, glycine 175, and asparagine 268 each bind substrate. Residue aspartate 296 coordinates Fe cation.

The protein belongs to the KAE1 / TsaD family. The cofactor is Fe(2+).

Its subcellular location is the cytoplasm. It catalyses the reaction L-threonylcarbamoyladenylate + adenosine(37) in tRNA = N(6)-L-threonylcarbamoyladenosine(37) in tRNA + AMP + H(+). Its function is as follows. Required for the formation of a threonylcarbamoyl group on adenosine at position 37 (t(6)A37) in tRNAs that read codons beginning with adenine. Is involved in the transfer of the threonylcarbamoyl moiety of threonylcarbamoyl-AMP (TC-AMP) to the N6 group of A37, together with TsaE and TsaB. TsaD likely plays a direct catalytic role in this reaction. This chain is tRNA N6-adenosine threonylcarbamoyltransferase, found in Campylobacter fetus subsp. fetus (strain 82-40).